Here is a 276-residue protein sequence, read N- to C-terminus: Rhomboid protease GlpG (276 aa).

Helical transmembrane passes span Val96–Ala116, Ala142–Gly162, Leu169–Gln189, Phe192–Trp212, Leu229–Met249, and Ala250–Val270. Ser201 serves as the catalytic Nucleophile. The active site involves His254.

It belongs to the peptidase S54 family.

Its subcellular location is the cell inner membrane. It catalyses the reaction Cleaves type-1 transmembrane domains using a catalytic dyad composed of serine and histidine that are contributed by different transmembrane domains.. Rhomboid-type serine protease that catalyzes intramembrane proteolysis. The polypeptide is Rhomboid protease GlpG (Citrobacter koseri (strain ATCC BAA-895 / CDC 4225-83 / SGSC4696)).